Here is a 480-residue protein sequence, read N- to C-terminus: Glutamate--tRNA ligase 2 (480 aa).

The short motif at 15–25 (PSPTGYLHVGG) is the 'HIGH' region element. Positions 248 to 252 (RLSKR) match the 'KMSKS' region motif. Residue K251 coordinates ATP.

This sequence belongs to the class-I aminoacyl-tRNA synthetase family. Glutamate--tRNA ligase type 1 subfamily. In terms of assembly, monomer.

The protein localises to the cytoplasm. The enzyme catalyses tRNA(Glu) + L-glutamate + ATP = L-glutamyl-tRNA(Glu) + AMP + diphosphate. Functionally, catalyzes the attachment of glutamate to tRNA(Glu) in a two-step reaction: glutamate is first activated by ATP to form Glu-AMP and then transferred to the acceptor end of tRNA(Glu). This is Glutamate--tRNA ligase 2 from Koribacter versatilis (strain Ellin345).